The sequence spans 884 residues: Alanine--tRNA ligase (884 aa).

Residues histidine 568, histidine 572, cysteine 670, and histidine 674 each coordinate Zn(2+).

The protein belongs to the class-II aminoacyl-tRNA synthetase family. Requires Zn(2+) as cofactor.

It localises to the cytoplasm. It catalyses the reaction tRNA(Ala) + L-alanine + ATP = L-alanyl-tRNA(Ala) + AMP + diphosphate. Functionally, catalyzes the attachment of alanine to tRNA(Ala) in a two-step reaction: alanine is first activated by ATP to form Ala-AMP and then transferred to the acceptor end of tRNA(Ala). Also edits incorrectly charged Ser-tRNA(Ala) and Gly-tRNA(Ala) via its editing domain. The chain is Alanine--tRNA ligase from Synechococcus sp. (strain JA-2-3B'a(2-13)) (Cyanobacteria bacterium Yellowstone B-Prime).